A 178-amino-acid polypeptide reads, in one-letter code: Ribosome maturation factor RimM (178 aa).

The PRC barrel domain maps to 99 to 178; the sequence is EGDYYWHDLI…TIEVDWDAGF (80 aa).

It belongs to the RimM family. In terms of assembly, binds ribosomal protein uS19.

It is found in the cytoplasm. An accessory protein needed during the final step in the assembly of 30S ribosomal subunit, possibly for assembly of the head region. Essential for efficient processing of 16S rRNA. May be needed both before and after RbfA during the maturation of 16S rRNA. It has affinity for free ribosomal 30S subunits but not for 70S ribosomes. This is Ribosome maturation factor RimM from Haemophilus influenzae (strain ATCC 51907 / DSM 11121 / KW20 / Rd).